A 207-amino-acid chain; its full sequence is Cytochrome c oxidase subunit 3 (207 aa).

5 consecutive transmembrane segments (helical) span residues 30–50 (FWLF…TFLA), 67–87 (VTLV…SVYA), 101–121 (LWLG…IYEF), 144–164 (LVGT…TLMI), and 186–206 (WHFI…MGMV).

Belongs to the cytochrome c oxidase subunit 3 family.

It localises to the cell membrane. The catalysed reaction is 4 Fe(II)-[cytochrome c] + O2 + 8 H(+)(in) = 4 Fe(III)-[cytochrome c] + 2 H2O + 4 H(+)(out). The protein is Cytochrome c oxidase subunit 3 (ctaE) of Bacillus subtilis (strain 168).